The sequence spans 162 residues: uncharacterized protein (162 aa).

Over residues 65–76 (EEKPLEVAQDRN) the composition is skewed to basic and acidic residues. The segment at 65-93 (EEKPLEVAQDRNNKRKAPSHLEPAHDFIS) is disordered.

This is an uncharacterized protein from Bacillus subtilis (strain 168).